Here is a 179-residue protein sequence, read N- to C-terminus: Large ribosomal subunit protein uL5 (179 aa).

This sequence belongs to the universal ribosomal protein uL5 family. As to quaternary structure, part of the 50S ribosomal subunit; part of the 5S rRNA/L5/L18/L25 subcomplex. Contacts the 5S rRNA and the P site tRNA. Forms a bridge to the 30S subunit in the 70S ribosome.

In terms of biological role, this is one of the proteins that bind and probably mediate the attachment of the 5S RNA into the large ribosomal subunit, where it forms part of the central protuberance. In the 70S ribosome it contacts protein S13 of the 30S subunit (bridge B1b), connecting the 2 subunits; this bridge is implicated in subunit movement. Contacts the P site tRNA; the 5S rRNA and some of its associated proteins might help stabilize positioning of ribosome-bound tRNAs. The sequence is that of Large ribosomal subunit protein uL5 from Alkalilimnicola ehrlichii (strain ATCC BAA-1101 / DSM 17681 / MLHE-1).